Here is a 220-residue protein sequence, read N- to C-terminus: Deoxyribose-phosphate aldolase (220 aa).

Catalysis depends on Asp-89, which acts as the Proton donor/acceptor. The active-site Schiff-base intermediate with acetaldehyde is the Lys-152. Lys-181 serves as the catalytic Proton donor/acceptor.

This sequence belongs to the DeoC/FbaB aldolase family. DeoC type 1 subfamily.

It is found in the cytoplasm. It carries out the reaction 2-deoxy-D-ribose 5-phosphate = D-glyceraldehyde 3-phosphate + acetaldehyde. The protein operates within carbohydrate degradation; 2-deoxy-D-ribose 1-phosphate degradation; D-glyceraldehyde 3-phosphate and acetaldehyde from 2-deoxy-alpha-D-ribose 1-phosphate: step 2/2. Functionally, catalyzes a reversible aldol reaction between acetaldehyde and D-glyceraldehyde 3-phosphate to generate 2-deoxy-D-ribose 5-phosphate. The chain is Deoxyribose-phosphate aldolase from Enterococcus faecalis (strain ATCC 700802 / V583).